The sequence spans 148 residues: Small ribosomal subunit protein bS16 (148 aa).

Residues 106–148 (QAAARAAAGAEDRPATTPKKAKKSGSAEEAEAAPATDAPAAGQ) form a disordered region. A compositionally biased stretch (low complexity) spans 137–148 (AAPATDAPAAGQ).

Belongs to the bacterial ribosomal protein bS16 family.

In Frankia casuarinae (strain DSM 45818 / CECT 9043 / HFP020203 / CcI3), this protein is Small ribosomal subunit protein bS16.